The sequence spans 163 residues: 3-hydroxyacyl-[acyl-carrier-protein] dehydratase FabZ (163 aa).

His-64 is an active-site residue.

The protein belongs to the thioester dehydratase family. FabZ subfamily.

The protein localises to the cytoplasm. It carries out the reaction a (3R)-hydroxyacyl-[ACP] = a (2E)-enoyl-[ACP] + H2O. Functionally, involved in unsaturated fatty acids biosynthesis. Catalyzes the dehydration of short chain beta-hydroxyacyl-ACPs and long chain saturated and unsaturated beta-hydroxyacyl-ACPs. The sequence is that of 3-hydroxyacyl-[acyl-carrier-protein] dehydratase FabZ from Caulobacter sp. (strain K31).